Here is a 514-residue protein sequence, read N- to C-terminus: Vacuolar aminopeptidase 1 (514 aa).

Positions 1-45 (MEEQREILEQLKKTLQMLTVEPSKNNQIANEEKEKKENENSWCIL) are cleaved as a propeptide — required for vacuolar localization. Mediates aggregation and vesicle formation in Cvt pathway. Asparagine 107 and asparagine 110 each carry an N-linked (GlcNAc...) asparagine glycan. Histidine 132 lines the Zn(2+) pocket. Histidine 210 is a binding site for substrate. Zn(2+) is bound by residues aspartate 303, glutamate 339, and glutamate 340. Glutamate 339 is a substrate binding site. Position 356 is a phosphoserine (serine 356). Aspartate 385 is a Zn(2+) binding site. Substrate contacts are provided by aspartate 385 and histidine 388. Asparagine 448 is a glycosylation site (N-linked (GlcNAc...) asparagine). Histidine 479 is a binding site for Zn(2+).

The protein belongs to the peptidase M18 family. In terms of assembly, homododecamer. The precursor form of aminopeptidase 1 (prApe1) assembles into dodecamers and further aggregates into higher multimers (the Ape1 complex) in the cytoplasm. The Ape1 complex is disaggregated in the vacuolar lumen, but mature aminopeptidase 1 (mApe1) retains its dodecameric form. Dodecamer assembly in the cytoplasm is essential for formation of an enzymatically active complex. If cytoplasmic homododecamerization of prApe1 is disturbed in mutants, homododecamers of mApe1 will form in the vacuole, but they are enzymatically inactive. Interacts with ATG19. It depends on Zn(2+) as a cofactor. Post-translationally, synthesized in a precursor form (prApe1) that has an amino-terminal propeptide. The N-terminal extension of the 61 kDa precursor is proteolytically processed in two sequential steps. The first step involves proteinase A (PrA/PEP4) and produces a 55 kDa unstable intermediate (iAPI). The second step involves proteinase B (PrB/PRB1) and converts iAPI into the 50 kDa stable, mature enzyme (mApe1).

The protein resides in the vacuole. It carries out the reaction Release of an N-terminal amino acid, preferably a neutral or hydrophobic one, from a polypeptide. Aminoacyl-arylamides are poor substrates.. Its activity is regulated as follows. Strongly and specifically activated by Cl(-) and Br(-), which act as positive allosteric effectors. Inactivated by metal-chelating agents. Its function is as follows. Resident vacuolar enzyme that catalyzes the removal of amino acids from the N-terminus of peptides and proteins. Also acts as the major cargo protein of the cytoplasm-to-vacuole targeting (Cvt) pathway. The precursor form of aminopeptidase 1 (prApe1) assembles into dodecamers and the propeptide mediates the aggregation of dodecamers into higher multimers. The multimers are then recognized via the propeptide by their receptor ATG19, and ATG19 further interacts with ATG11, which tethers the APE1-ATG19 complex to the pre-autophagosomal structure (PAS). The cargo-receptor complex (also Cvt complex) is selectively enwrapped by a double-membrane structure termed the Cvt vesicle under vegetative growth conditions and by a similar but larger double-membrane structure termed the autophagosome under nitrogen starvation conditions. The Cvt vesicle or the autophagosome fuses with the vacuolar membrane and release its content in the vacuolar lumen. In the vacuole, prApe1 is processed into mature aminopeptidase 1 (mApe1). This chain is Vacuolar aminopeptidase 1, found in Saccharomyces cerevisiae (strain ATCC 204508 / S288c) (Baker's yeast).